The chain runs to 141 residues: Granulocyte-macrophage colony-stimulating factor (141 aa).

An N-terminal signal peptide occupies residues 1-17 (MWLQNLLFLGIVVYSLS). The O-linked (GalNAc...) serine glycan is linked to Ser-22. Thr-27 is a glycosylation site (O-linked (GalNAc...) threonine). Cystine bridges form between Cys-68/Cys-110 and Cys-102/Cys-135. N-linked (GlcNAc...) asparagine glycans are attached at residues Asn-83 and Asn-92.

The protein belongs to the GM-CSF family. Monomer. The signaling GM-CSF receptor complex is a dodecamer of two head-to-head hexamers of two alpha, two beta, and two ligand subunits.

The protein resides in the secreted. In terms of biological role, cytokine that stimulates the growth and differentiation of hematopoietic precursor cells from various lineages, including granulocytes, macrophages, eosinophils and erythrocytes. The protein is Granulocyte-macrophage colony-stimulating factor (Csf2) of Mus musculus (Mouse).